The chain runs to 197 residues: Translation machinery-associated protein 22 (197 aa).

The SUI1 domain occupies 103–174; the sequence is IRIKRVERNK…DVREFLIKNY (72 aa).

This sequence belongs to the DENR family. In terms of assembly, interacts with the 40S ribosomal subunit.

It localises to the cytoplasm. This chain is Translation machinery-associated protein 22 (tma22), found in Botryotinia fuckeliana (strain B05.10) (Noble rot fungus).